The sequence spans 147 residues: D-aminoacyl-tRNA deacylase (147 aa).

A Gly-cisPro motif, important for rejection of L-amino acids motif is present at residues 136 to 137 (GP).

Belongs to the DTD family. As to quaternary structure, homodimer.

Its subcellular location is the cytoplasm. The catalysed reaction is glycyl-tRNA(Ala) + H2O = tRNA(Ala) + glycine + H(+). The enzyme catalyses a D-aminoacyl-tRNA + H2O = a tRNA + a D-alpha-amino acid + H(+). An aminoacyl-tRNA editing enzyme that deacylates mischarged D-aminoacyl-tRNAs. Also deacylates mischarged glycyl-tRNA(Ala), protecting cells against glycine mischarging by AlaRS. Acts via tRNA-based rather than protein-based catalysis; rejects L-amino acids rather than detecting D-amino acids in the active site. By recycling D-aminoacyl-tRNA to D-amino acids and free tRNA molecules, this enzyme counteracts the toxicity associated with the formation of D-aminoacyl-tRNA entities in vivo and helps enforce protein L-homochirality. The protein is D-aminoacyl-tRNA deacylase of Streptococcus pneumoniae (strain P1031).